Consider the following 204-residue polypeptide: Large ribosomal subunit protein eL15B (204 aa).

The segment at 165–185 (TATGKKSRGINKGHKFNNTKA) is disordered. Residues 169 to 185 (KKSRGINKGHKFNNTKA) show a composition bias toward basic residues.

Belongs to the eukaryotic ribosomal protein eL15 family. As to quaternary structure, component of the large ribosomal subunit (LSU). Mature yeast ribosomes consist of a small (40S) and a large (60S) subunit. The 40S small subunit contains 1 molecule of ribosomal RNA (18S rRNA) and 33 different proteins (encoded by 57 genes). The large 60S subunit contains 3 rRNA molecules (25S, 5.8S and 5S rRNA) and 46 different proteins (encoded by 81 genes).

It localises to the cytoplasm. In terms of biological role, component of the ribosome, a large ribonucleoprotein complex responsible for the synthesis of proteins in the cell. The small ribosomal subunit (SSU) binds messenger RNAs (mRNAs) and translates the encoded message by selecting cognate aminoacyl-transfer RNA (tRNA) molecules. The large subunit (LSU) contains the ribosomal catalytic site termed the peptidyl transferase center (PTC), which catalyzes the formation of peptide bonds, thereby polymerizing the amino acids delivered by tRNAs into a polypeptide chain. The nascent polypeptides leave the ribosome through a tunnel in the LSU and interact with protein factors that function in enzymatic processing, targeting, and the membrane insertion of nascent chains at the exit of the ribosomal tunnel. The polypeptide is Large ribosomal subunit protein eL15B (Saccharomyces cerevisiae (strain ATCC 204508 / S288c) (Baker's yeast)).